Here is a 102-residue protein sequence, read N- to C-terminus: Small ribosomal subunit protein uS10 (102 aa).

The protein belongs to the universal ribosomal protein uS10 family. As to quaternary structure, part of the 30S ribosomal subunit.

Involved in the binding of tRNA to the ribosomes. The polypeptide is Small ribosomal subunit protein uS10 (Xanthobacter autotrophicus (strain ATCC BAA-1158 / Py2)).